We begin with the raw amino-acid sequence, 479 residues long: ESX-1 secretion system ATPase EccB1 (479 aa).

The Cytoplasmic segment spans residues 1–44 (MAGFRLTTKVQVSGWRFLLRRVEHAIVRRDTRMFDDPLQFYSRA). Residues 45 to 65 (VFAGVVVSVLICLGAALMAYF) traverse the membrane as a helical segment. At 66-479 (KPLGKQGSDQ…NPRKVASGEG (414 aa)) the chain is on the periplasmic side. Cys-152 and Cys-347 are joined by a disulfide.

It belongs to the EccB family. In terms of assembly, part of the ESX-1 / type VII secretion system (T7SS), which is composed of cytosolic and membrane components. The ESX-1 membrane complex is composed of EccB1, EccCa1, EccCb1, EccD1 and EccE1.

The protein resides in the cell inner membrane. Its function is as follows. An ATPase. Part of the ESX-1 / type VII specialized secretion system (T7SS), which exports several proteins including EsxA and EsxB. Plays a role in DNA conjugation, in both donor and recipient strains. The chain is ESX-1 secretion system ATPase EccB1 from Mycolicibacterium smegmatis (strain MKD8) (Mycobacterium smegmatis).